The chain runs to 458 residues: A-type ATP synthase subunit B (458 aa).

Belongs to the ATPase alpha/beta chains family. As to quaternary structure, has multiple subunits with at least A(3), B(3), C, D, E, F, H, I and proteolipid K(x).

The protein resides in the cell membrane. Functionally, component of the A-type ATP synthase that produces ATP from ADP in the presence of a proton gradient across the membrane. The B chain is a regulatory subunit. This Methanocella arvoryzae (strain DSM 22066 / NBRC 105507 / MRE50) protein is A-type ATP synthase subunit B.